We begin with the raw amino-acid sequence, 594 residues long: MRRRPLCTSASRVTASLLLSFLAVSSAAELPILPAPPISPQPHSSEKDFSLRHIFHHGTYKYPELHRRLDVPENAAVWAAEHLHSEHREPVPRLRVKAEPMSIQRLADRSKEAIDGILEWGRMKGRAVQLAEDDWTIDEIAGPNVTDRETVLSFARMASNAYILEPNTGEWEDVGGGFNYTEDFGWESDGLRGHIFADTENSTVVIGLKGTSPAMFDGSETTTKDKENDNLFFSCCCGQGGQFLWRQVCDCQTSAYTCNSTCLVTALREKNRYYYAAQDLYHNVTALYPHAEIWMAGHSLGGAVSSFLSLTFGHPAVTFEAVPEAMPASRLGLPVPPGHEIGSLQKRKMTGGYHFGHTADPIYMGQCNQATSVCTFGGYALQSVCHTGKKCVYDTVKDLGWRVGIGTHKIVEVIKDVIEKYDAPPICEPYINCTDCYTWKYFESNGTETTTTSTSKPTSTSKSSKSNTRTRTETCKTPGWWGCLDETTTGTQTSTSTPKHTSTSSTSTCKTPGWFGCKGRQRRANHNNNKVLAHNYPRPSTHRNNNILFLPNINFFMSVPRLVRRLSRRRRPSLPNKTEVVNSSANHFVYVLHA.

The Cytoplasmic portion of the chain corresponds to 1-12 (MRRRPLCTSASR). The chain crosses the membrane as a helical; Signal-anchor for type II membrane protein span at residues 13 to 33 (VTASLLLSFLAVSSAAELPIL). At 34-594 (PAPPISPQPH…ANHFVYVLHA (561 aa)) the chain is on the lumenal side. N-linked (GlcNAc...) asparagine glycosylation is found at Asn144, Asn179, Asn201, Asn259, and Asn283. Ser299 serves as the catalytic Charge relay system. Asn432 and Asn445 each carry an N-linked (GlcNAc...) asparagine glycan. Over residues 447-469 (TETTTTSTSKPTSTSKSSKSNTR) the composition is skewed to low complexity. Disordered stretches follow at residues 447–473 (TETT…TRTE) and 489–509 (TGTQ…TSTC). N-linked (GlcNAc...) asparagine glycosylation is found at Asn576 and Asn582.

Belongs to the AB hydrolase superfamily. Lipase family. In terms of assembly, binds to both phosphatidylinositol (PI) and phosphatidylinositol 3,5-bisphosphate (PIP2).

It localises to the endosome. It is found in the multivesicular body membrane. The protein resides in the prevacuolar compartment membrane. It carries out the reaction a triacylglycerol + H2O = a diacylglycerol + a fatty acid + H(+). Lipase which is essential for lysis of subvacuolar cytoplasm to vacuole targeted bodies and intravacuolar autophagic bodies. Involved in the lysis of intravacuolar multivesicular body (MVB) vesicles. The intravacuolar membrane disintegration by ATG15 is critical to life span extension. The protein is Putative lipase ATG15-1 (ATG15-1) of Phaeosphaeria nodorum (strain SN15 / ATCC MYA-4574 / FGSC 10173) (Glume blotch fungus).